Consider the following 704-residue polypeptide: Glycine--tRNA ligase beta subunit (704 aa).

This sequence belongs to the class-II aminoacyl-tRNA synthetase family. In terms of assembly, tetramer of two alpha and two beta subunits.

It is found in the cytoplasm. The enzyme catalyses tRNA(Gly) + glycine + ATP = glycyl-tRNA(Gly) + AMP + diphosphate. This chain is Glycine--tRNA ligase beta subunit, found in Rhizobium etli (strain ATCC 51251 / DSM 11541 / JCM 21823 / NBRC 15573 / CFN 42).